The sequence spans 475 residues: UDP-glucosyltransferase UGT13248 (475 aa).

Over residues 1–17 (METTVTAVSGTTSSSVG) the composition is skewed to low complexity. The disordered stretch occupies residues 1–20 (METTVTAVSGTTSSSVGHGA). Residues His38, Ser152, Thr299, Cys352, 369 to 377 (HCGWNSTLE), and 393 to 394 (DQ) contribute to the UDP-alpha-D-glucose site.

Belongs to the UDP-glycosyltransferase family.

Involved in the detoxification of the Fusarium mycotoxin deoxynivalenol by the transfer of glucose from UDP-D-glucose to the hydroxyl group at C-3, forming deoxynivalenol-3-O-beta-D-glucoside. In Hordeum vulgare subsp. vulgare (Domesticated barley), this protein is UDP-glucosyltransferase UGT13248.